A 314-amino-acid polypeptide reads, in one-letter code: Aspartate carbamoyltransferase catalytic subunit (314 aa).

The carbamoyl phosphate site is built by arginine 55 and threonine 56. Lysine 83 contributes to the L-aspartate binding site. Residues arginine 105, histidine 134, and glutamine 137 each contribute to the carbamoyl phosphate site. L-aspartate is bound by residues arginine 167 and arginine 221. Residues glycine 262 and proline 263 each coordinate carbamoyl phosphate.

The protein belongs to the aspartate/ornithine carbamoyltransferase superfamily. ATCase family. As to quaternary structure, heterododecamer (2C3:3R2) of six catalytic PyrB chains organized as two trimers (C3), and six regulatory PyrI chains organized as three dimers (R2).

It catalyses the reaction carbamoyl phosphate + L-aspartate = N-carbamoyl-L-aspartate + phosphate + H(+). The protein operates within pyrimidine metabolism; UMP biosynthesis via de novo pathway; (S)-dihydroorotate from bicarbonate: step 2/3. Functionally, catalyzes the condensation of carbamoyl phosphate and aspartate to form carbamoyl aspartate and inorganic phosphate, the committed step in the de novo pyrimidine nucleotide biosynthesis pathway. In Corynebacterium urealyticum (strain ATCC 43042 / DSM 7109), this protein is Aspartate carbamoyltransferase catalytic subunit.